The primary structure comprises 615 residues: DNA mismatch repair protein MutL (615 aa).

The tract at residues 363 to 397 (FAEPAAREPVAPRYTPAPASGSRPAAPWPNAQPGY) is disordered. Positions 364–391 (AEPAAREPVAPRYTPAPASGSRPAAPWP) are enriched in low complexity.

The protein belongs to the DNA mismatch repair MutL/HexB family.

Functionally, this protein is involved in the repair of mismatches in DNA. It is required for dam-dependent methyl-directed DNA mismatch repair. May act as a 'molecular matchmaker', a protein that promotes the formation of a stable complex between two or more DNA-binding proteins in an ATP-dependent manner without itself being part of a final effector complex. In Shigella boydii serotype 4 (strain Sb227), this protein is DNA mismatch repair protein MutL.